The primary structure comprises 191 residues: Ribonuclease HII (191 aa).

In terms of domain architecture, RNase H type-2 spans 7-191 (ILMAGVDEVG…YSPVADLISK (185 aa)). Residues aspartate 13, glutamate 14, and aspartate 103 each contribute to the a divalent metal cation site.

Belongs to the RNase HII family. Requires Mn(2+) as cofactor. Mg(2+) is required as a cofactor.

It localises to the cytoplasm. It catalyses the reaction Endonucleolytic cleavage to 5'-phosphomonoester.. In terms of biological role, endonuclease that specifically degrades the RNA of RNA-DNA hybrids. This Legionella pneumophila (strain Paris) protein is Ribonuclease HII.